Here is a 307-residue protein sequence, read N- to C-terminus: MKLTLNRILFSGLALSILFTLTGCVGRDAHGNPKGMIWEFLGKPMSYFIDYFANNAGLGYGLAIIIVTIIVRTLILPLGLYQSWKASYQSEKMAFLKPVFEPINKRIKQANSQEEKMAAQTELMAAQRAHGINPLGGIGCLPLLIQMPFFSAMYFAAQYTKGVSTSTFMGIDLGSRSLVLTAIIAALYFFQSWLSMMAVSEEQREQMKTMMYTMPIMMIFMSFSLPAGVGLYWLVGGFFSIIQQLITTYLLKPRLHKQIKEEYAKNPPKAYQSTSSRKDVTPSQNMEQANLPKKIKSNRNAGKQRKR.

The signal sequence occupies residues Met-1 to Gly-23. A lipid anchor (N-palmitoyl cysteine) is attached at Cys-24. Residue Cys-24 is the site of S-diacylglycerol cysteine attachment. Transmembrane regions (helical) follow at residues Leu-58–Leu-78, Leu-135–Phe-155, Val-179–Val-199, Thr-209–Leu-225, and Leu-231–Leu-251. A disordered region spans residues Tyr-263–Arg-307. Polar residues predominate over residues Tyr-271 to Gln-288. Positions Lys-293–Arg-307 are enriched in basic residues.

Belongs to the OXA1/ALB3/YidC family. Type 2 subfamily.

The protein resides in the cell membrane. Functionally, required for the insertion and/or proper folding and/or complex formation of integral membrane proteins into the membrane. Involved in integration of membrane proteins that insert both dependently and independently of the Sec translocase complex, as well as at least some lipoproteins. The polypeptide is Membrane protein insertase YidC 2 (Streptococcus pyogenes serotype M3 (strain ATCC BAA-595 / MGAS315)).